The sequence spans 249 residues: Ribonuclease 3 (249 aa).

Residues 20-149 enclose the RNase III domain; it reads FKEFQERISV…FIGALYLDQG (130 aa). E62 is a binding site for Mg(2+). Residue D66 is part of the active site. Mg(2+) is bound by residues D135 and E138. E138 is a catalytic residue. The DRBM domain occupies 175 to 244; sequence DFKSQLQEFV…AQEALAKMQK (70 aa). The segment at 223 to 249 is disordered; the sequence is NGRSKKEAEQHAAQEALAKMQKHHTKQ.

This sequence belongs to the ribonuclease III family. In terms of assembly, homodimer. It depends on Mg(2+) as a cofactor.

The protein resides in the cytoplasm. The catalysed reaction is Endonucleolytic cleavage to 5'-phosphomonoester.. In terms of biological role, digests double-stranded RNA. Involved in the processing of primary rRNA transcript to yield the immediate precursors to the large and small rRNAs (23S and 16S). Processes some mRNAs, and tRNAs when they are encoded in the rRNA operon. Processes pre-crRNA and tracrRNA of type II CRISPR loci if present in the organism. This chain is Ribonuclease 3, found in Bacillus velezensis (strain DSM 23117 / BGSC 10A6 / LMG 26770 / FZB42) (Bacillus amyloliquefaciens subsp. plantarum).